The primary structure comprises 141 residues: D-aminoacyl-tRNA deacylase (141 aa).

The Gly-cisPro motif, important for rejection of L-amino acids signature appears at 133 to 134 (GP).

This sequence belongs to the DTD family. In terms of assembly, homodimer.

It is found in the cytoplasm. It carries out the reaction glycyl-tRNA(Ala) + H2O = tRNA(Ala) + glycine + H(+). It catalyses the reaction a D-aminoacyl-tRNA + H2O = a tRNA + a D-alpha-amino acid + H(+). Its function is as follows. An aminoacyl-tRNA editing enzyme that deacylates mischarged D-aminoacyl-tRNAs. Also deacylates mischarged glycyl-tRNA(Ala), protecting cells against glycine mischarging by AlaRS. Acts via tRNA-based rather than protein-based catalysis; rejects L-amino acids rather than detecting D-amino acids in the active site. By recycling D-aminoacyl-tRNA to D-amino acids and free tRNA molecules, this enzyme counteracts the toxicity associated with the formation of D-aminoacyl-tRNA entities in vivo and helps enforce protein L-homochirality. The protein is D-aminoacyl-tRNA deacylase of Beutenbergia cavernae (strain ATCC BAA-8 / DSM 12333 / CCUG 43141 / JCM 11478 / NBRC 16432 / NCIMB 13614 / HKI 0122).